The sequence spans 201 residues: Lipoprotein signal peptidase (201 aa).

2 helical membrane passes run Ser73–Ile93 and Thr97–Asp117. Active-site residues include Asp126 and Asp144. Residues Tyr135 to Ile155 traverse the membrane as a helical segment.

Belongs to the peptidase A8 family.

The protein localises to the cell inner membrane. It carries out the reaction Release of signal peptides from bacterial membrane prolipoproteins. Hydrolyzes -Xaa-Yaa-Zaa-|-(S,diacylglyceryl)Cys-, in which Xaa is hydrophobic (preferably Leu), and Yaa (Ala or Ser) and Zaa (Gly or Ala) have small, neutral side chains.. It functions in the pathway protein modification; lipoprotein biosynthesis (signal peptide cleavage). Its function is as follows. This protein specifically catalyzes the removal of signal peptides from prolipoproteins. The sequence is that of Lipoprotein signal peptidase from Rickettsia africae (strain ESF-5).